The primary structure comprises 269 residues: Putative ABC transporter ATP-binding protein PF0528 (269 aa).

One can recognise an ABC transporter domain in the interval 6-237; sequence IVVENLYSSY…EILKRNNLDV (232 aa). 39–46 provides a ligand contact to ATP; it reads GPNGAGKS.

It belongs to the ABC transporter superfamily.

The protein resides in the cell membrane. Its function is as follows. Probably part of an ABC transporter complex. Responsible for energy coupling to the transport system. In Pyrococcus furiosus (strain ATCC 43587 / DSM 3638 / JCM 8422 / Vc1), this protein is Putative ABC transporter ATP-binding protein PF0528.